We begin with the raw amino-acid sequence, 528 residues long: Coiled-coil domain-containing protein 116 (528 aa).

Positions 43–68 are disordered; that stretch reads GHVPHPPSTCGSSALQNQRRNKRHPQ. The span at 51–60 shows a compositional bias: polar residues; that stretch reads TCGSSALQNQ. Positions 81 to 104 form a coiled coil; that stretch reads HVLDSLETVVEKATERMAAMKTEA. 2 disordered regions span residues 335 to 444 and 497 to 528; these read PLFP…RQRA and SSSP…THHS. Residues 363 to 378 show a composition bias toward polar residues; sequence PTNSGQPHPTVSSPKT. At Ser389 the chain carries Phosphoserine. Basic and acidic residues predominate over residues 419–429; the sequence is HSREKEPDSDP. Residues 434-443 are compositionally biased toward polar residues; that stretch reads PPVSLSSRQR. Positions 497-510 are enriched in low complexity; it reads SSSPSSLCPEVTSS.

It localises to the cytoplasm. The protein localises to the cytoskeleton. The protein resides in the microtubule organizing center. Its subcellular location is the centrosome. This chain is Coiled-coil domain-containing protein 116 (CCDC116), found in Macaca fascicularis (Crab-eating macaque).